Consider the following 658-residue polypeptide: Transport protein particle subunit trs85-1 (658 aa).

The protein belongs to the TRS85 family. As to quaternary structure, part of the multisubunit TRAPP (transport protein particle) complexes I and II.

It is found in the golgi apparatus. Its subcellular location is the cis-Golgi network. Functionally, component of the TRAPP I and TRAPP II complexes. TRAPP I plays a key role in the late stages of endoplasmic reticulum to Golgi traffic. TRAPP II seems to play a role in intra-Golgi transport. Has a role late in meiosis following DNA replication. The protein is Transport protein particle subunit trs85-1 (trs85-1) of Schizosaccharomyces pombe (strain 972 / ATCC 24843) (Fission yeast).